The primary structure comprises 317 residues: Transaldolase (317 aa).

K126 functions as the Schiff-base intermediate with substrate in the catalytic mechanism.

It belongs to the transaldolase family. Type 1 subfamily. In terms of assembly, homodimer.

Its subcellular location is the cytoplasm. The catalysed reaction is D-sedoheptulose 7-phosphate + D-glyceraldehyde 3-phosphate = D-erythrose 4-phosphate + beta-D-fructose 6-phosphate. Its pathway is carbohydrate degradation; pentose phosphate pathway; D-glyceraldehyde 3-phosphate and beta-D-fructose 6-phosphate from D-ribose 5-phosphate and D-xylulose 5-phosphate (non-oxidative stage): step 2/3. Its function is as follows. Transaldolase is important for the balance of metabolites in the pentose-phosphate pathway. The polypeptide is Transaldolase (Burkholderia pseudomallei (strain K96243)).